The following is a 300-amino-acid chain: MSYYFKNLKPDLNSDVEEDDGNLLESIMANKSKREIDEQESSDDELKTLSFGSLKKAETVIDEEDFKDTKPVHKKPITTTYREESFDEDEDSEDQSDEDAGFFEEDSEDETHHGQKVPKKKSKHAPVEQSSKKRVPRVRNIPGLEIPRNKRSNLYRDIRFDKSTGKALDSSIIRKRYQFLDEYREKEIDELQKLLQDRKFLSKIDQGEREEMEQRLKSMKSRLQSMKNKDLEREILKEYENDMNKNNNTRYHLKKSEKRKVVQKWKFDHMKTKQREKVMERKRKKRLGKEFKQFEFHNRR.

Phosphoserine is present on residues serine 14, serine 41, and serine 42. Positions 33 to 146 are disordered; that stretch reads KREIDEQESS…RVRNIPGLEI (114 aa). The segment covering 85–109 has biased composition (acidic residues); the sequence is SFDEDEDSEDQSDEDAGFFEEDSED. Positions 114 to 124 are enriched in basic residues; it reads GQKVPKKKSKH. A coiled-coil region spans residues 203-248; that stretch reads KIDQGEREEMEQRLKSMKSRLQSMKNKDLEREILKEYENDMNKNNN.

Belongs to the RRP36 family. As to quaternary structure, associates with 90S and pre-40S pre-ribosomal particles. Interacts with CKA1, CKA2, CKB1, CKB2, PWP2, UTP15, UTP17 and UTP22.

The protein localises to the nucleus. The protein resides in the nucleolus. Functionally, component of the 90S pre-ribosome involved in the maturation of rRNAs. Required for early cleavages of the pre-RNAs in the 40S ribosomal subunit maturation pathway. This Saccharomyces cerevisiae (strain YJM789) (Baker's yeast) protein is rRNA biogenesis protein RRP36 (RRP36).